We begin with the raw amino-acid sequence, 268 residues long: MSNKVHLGHTARKRFGQNFLTDGNVIDRIVGAIAPDNHHVMVEIGPGLGALTEPVAEAVDNLTVVELDRDLVERLHHHPVLKDKLTIHQGDALQFDFGQLSVPGKKMKVFGNLPYNISTPLMFHLFEFAEQIETMHFMLQKEVVLRLSASPGCKAYGRLTVMAQYFCQVVPVLEVPPHSFTPAPKVDSAVVRLLPYAVKPFPCKDVTVLRHLCTTAFNMRRKTLRNNLKHMLSDDEFEQLGIDSSQRPEQISVQQYVAMANMVCDKKA.

Asn18, Leu20, Gly45, Glu66, Asp91, and Asn112 together coordinate S-adenosyl-L-methionine.

The protein belongs to the class I-like SAM-binding methyltransferase superfamily. rRNA adenine N(6)-methyltransferase family. RsmA subfamily.

It is found in the cytoplasm. The catalysed reaction is adenosine(1518)/adenosine(1519) in 16S rRNA + 4 S-adenosyl-L-methionine = N(6)-dimethyladenosine(1518)/N(6)-dimethyladenosine(1519) in 16S rRNA + 4 S-adenosyl-L-homocysteine + 4 H(+). Specifically dimethylates two adjacent adenosines (A1518 and A1519) in the loop of a conserved hairpin near the 3'-end of 16S rRNA in the 30S particle. May play a critical role in biogenesis of 30S subunits. This chain is Ribosomal RNA small subunit methyltransferase A, found in Shewanella baltica (strain OS185).